Consider the following 206-residue polypeptide: LexA repressor (206 aa).

Residues R28–K48 constitute a DNA-binding region (H-T-H motif). Active-site for autocatalytic cleavage activity residues include S123 and K160.

The protein belongs to the peptidase S24 family. In terms of assembly, homodimer.

The catalysed reaction is Hydrolysis of Ala-|-Gly bond in repressor LexA.. Functionally, represses a number of genes involved in the response to DNA damage (SOS response), including recA and lexA. In the presence of single-stranded DNA, RecA interacts with LexA causing an autocatalytic cleavage which disrupts the DNA-binding part of LexA, leading to derepression of the SOS regulon and eventually DNA repair. The protein is LexA repressor of Shewanella oneidensis (strain ATCC 700550 / JCM 31522 / CIP 106686 / LMG 19005 / NCIMB 14063 / MR-1).